Consider the following 361-residue polypeptide: Porphobilinogen deaminase (361 aa).

Serine 2 bears the N-acetylserine mark. A Phosphoserine modification is found at serine 69. Position 74 is an N6-acetyllysine (lysine 74). The residue at position 147 (serine 147) is a Phosphoserine. The residue at position 261 (cysteine 261) is an S-(dipyrrolylmethanemethyl)cysteine.

The protein belongs to the HMBS family. As to quaternary structure, monomer. Dipyrromethane is required as a cofactor.

Its subcellular location is the cytoplasm. It localises to the cytosol. The enzyme catalyses 4 porphobilinogen + H2O = hydroxymethylbilane + 4 NH4(+). It functions in the pathway porphyrin-containing compound metabolism; protoporphyrin-IX biosynthesis; coproporphyrinogen-III from 5-aminolevulinate: step 2/4. In terms of biological role, as part of the heme biosynthetic pathway, catalyzes the sequential polymerization of four molecules of porphobilinogen to form hydroxymethylbilane, also known as preuroporphyrinogen. Catalysis begins with the assembly of the dipyrromethane cofactor by the apoenzyme from two molecules of porphobilinogen or from preuroporphyrinogen. The covalently linked cofactor acts as a primer, around which the tetrapyrrole product is assembled. In the last step of catalysis, the product, preuroporphyrinogen, is released, leaving the cofactor bound to the holodeaminase intact. This chain is Porphobilinogen deaminase (Hmbs), found in Mus musculus (Mouse).